The sequence spans 99 residues: Small ribosomal subunit protein bS18 (99 aa).

Residues Met-1–Pro-25 are compositionally biased toward basic and acidic residues. The segment at Met-1 to Asn-28 is disordered.

This sequence belongs to the bacterial ribosomal protein bS18 family. Part of the 30S ribosomal subunit. Forms a tight heterodimer with protein bS6.

Binds as a heterodimer with protein bS6 to the central domain of the 16S rRNA, where it helps stabilize the platform of the 30S subunit. The sequence is that of Small ribosomal subunit protein bS18 from Treponema pallidum (strain Nichols).